The sequence spans 553 residues: Thioredoxin domain-containing protein 2 (553 aa).

Disordered stretches follow at residues 1 to 37 (MDVD…DANE) and 77 to 442 (TEES…EETM). Over residues 99–143 (PKQDDSPKSSEETIQPKEGDIPKAPEETIQSKKEDLPKSSEKAIQ) the composition is skewed to basic and acidic residues. A run of 22 repeats spans residues 113 to 127 (QPKE…EETI), 128 to 142 (QSKK…EKAI), 143 to 157 (QPKE…AKPI), 158 to 172 (QPKL…VKPS), 173 to 187 (QPKE…EETI), 188 to 202 (QSKK…EEAI), 203 to 217 (QPKE…AKPI), 218 to 232 (QPKL…VKPS), 233 to 247 (QPKE…EETI), 248 to 262 (QPKE…AKPI), 263 to 277 (QPKL…VKPS), 278 to 292 (QPKE…EEAI), 293 to 307 (QPKE…EEAI), 308 to 322 (QPKE…EEAI), 323 to 337 (QPKE…EEAI), 338 to 352 (QPKE…EETI), 353 to 367 (QPKK…EEAI), 368 to 382 (QPKE…KQAI), 383 to 397 (QPKE…EEAI), 398 to 412 (PPKE…EETI), 413 to 427 (QPKE…EEAT), and 428 to 442 (PSKE…EETM). Residues 113 to 442 (QPKEGDIPKA…DILKPEEETM (330 aa)) form a 22 X 15 AA approximate tandem repeat of Q-P-K-X-G-D-I-P-K-S-[PS]-E-[KE]-X-I region. Residues 173–209 (QPKEGDIPKAPEETIQSKKEDLPKSSEEAIQPKEGDI) are compositionally biased toward basic and acidic residues. A compositionally biased stretch (basic and acidic residues) spans 233 to 254 (QPKESDIPKSPEETIQPKEGDI). Composition is skewed to basic and acidic residues over residues 278-376 (QPKE…DIPK) and 385-439 (KEGD…KPEE). S362 is modified (phosphoserine). S392 is subject to Phosphoserine. The Thioredoxin domain occupies 429 to 553 (SKEGDILKPE…KLEAVIAELK (125 aa)). Residues C480 and C483 are joined by a disulfide bond.

In terms of tissue distribution, testis-specific. Only expressed during spermiogenesis, prominently in round and elongating spermatids.

Its subcellular location is the cytoplasm. Probably plays a regulatory role in sperm development. May participate in regulation of fibrous sheath (FS) assembly by supporting the formation of disulfide bonds during sperm tail morphogenesis. May also be required to rectify incorrect disulfide pairing and generate suitable pairs between the FS constituents. Can reduce disulfide bonds in vitro in the presence of NADP and thioredoxin reductase. The polypeptide is Thioredoxin domain-containing protein 2 (TXNDC2) (Homo sapiens (Human)).